Consider the following 262-residue polypeptide: Abhydrolase domain-containing protein AKT2 (262 aa).

Residues 260 to 262 (SKL) carry the Peroxisomal targeting signal type 1 motif.

It belongs to the AB hydrolase superfamily. AKT2 hydrolase family.

It localises to the peroxisome. The protein operates within mycotoxin biosynthesis. Its function is as follows. Abhydrolase domain-containing protein; part of the gene clusters that mediate the biosynthesis of the host-selective toxins (HSTs) AK-toxins responsible for Japanese pear black spot disease by the Japanese pear pathotype. AK-toxins are esters of 9,10-epoxy 8-hydroxy 9-methyldecatrienoic acid (EDA). On cellular level, AK-toxins affect plasma membrane of susceptible cells and cause a sudden increase in loss of K(+) after a few minutes of toxin treatment. The acyl-CoA ligase AKT1, the hydrolase AKT2 and enoyl-CoA hydratase AKT3 are all involved in the biosynthesis of the AK-, AF- and ACT-toxin common 9,10-epoxy-8-hydroxy-9-methyl-decatrienoic acid (EDA) structural moiety. Part of the EDA biosynthesis occurs in the peroxisome since these 3 enzymes are localized in peroxisomes. The exact roles of the 3 enzymes, as well as of additional AK-toxin clusters enzymes, including AKT4, AKT6 and AKTS1, have still to be elucidated. The Cytochrome P450 monooxygenase AKT7 on the other side functions to limit production of EDA and AK-toxin, probably via the catalysis of a side reaction of EDA or its precursor. This is Abhydrolase domain-containing protein AKT2 from Alternaria alternata (Alternaria rot fungus).